Reading from the N-terminus, the 414-residue chain is Ribulose bisphosphate carboxylase large chain (414 aa).

Residues Asn-100 and Thr-150 each coordinate substrate. Lys-152 acts as the Proton acceptor in catalysis. Substrate is bound at residue Lys-154. Residues Lys-178, Asp-180, and Glu-181 each coordinate Mg(2+). The residue at position 178 (Lys-178) is an N6-carboxylysine. His-271 acts as the Proton acceptor in catalysis. Substrate contacts are provided by Arg-272, His-304, and Ser-356.

It belongs to the RuBisCO large chain family. Type I subfamily. In terms of assembly, heterohexadecamer of 8 large chains and 8 small chains; disulfide-linked. The disulfide link is formed within the large subunit homodimers. The cofactor is Mg(2+). Post-translationally, the disulfide bond which can form in the large chain dimeric partners within the hexadecamer appears to be associated with oxidative stress and protein turnover.

Its subcellular location is the plastid. The protein localises to the chloroplast. It carries out the reaction 2 (2R)-3-phosphoglycerate + 2 H(+) = D-ribulose 1,5-bisphosphate + CO2 + H2O. The enzyme catalyses D-ribulose 1,5-bisphosphate + O2 = 2-phosphoglycolate + (2R)-3-phosphoglycerate + 2 H(+). RuBisCO catalyzes two reactions: the carboxylation of D-ribulose 1,5-bisphosphate, the primary event in carbon dioxide fixation, as well as the oxidative fragmentation of the pentose substrate in the photorespiration process. Both reactions occur simultaneously and in competition at the same active site. The sequence is that of Ribulose bisphosphate carboxylase large chain (rbcL) from Blechnopsis orientalis (Fish fern).